The following is a 239-amino-acid chain: Major prion protein (239 aa).

Residues 1–15 (MLVLFVATWSDLGLC) form the signal peptide. The tract at residues 15–98 (CKKRPKPGGW…NQWNKPSKPK (84 aa)) is disordered. The interval 16–31 (KKRPKPGGWNTGGSRY) is interaction with ADGRG6. An interaction with GRB2, ERI3 and SYN1 region spans residues 16–222 (KKRPKPGGWN…ESQAYYQRGS (207 aa)). Tandem repeats lie at residues 44–51 (PQSGGWGQ), 52–59 (PHGGGWGQ), 60–67 (PHGGGWGQ), 68–75 (PHGGGWGQ), and 76–83 (PHGGGWGQ). The interval 44–83 (PQSGGWGQPHGGGWGQPHGGGWGQPHGGGWGQPHGGGWGQ) is 5 X 8 AA tandem repeats of P-H-G-G-G-W-G-Q. Over residues 47-87 (GGWGQPHGGGWGQPHGGGWGQPHGGGWGQPHGGGWGQGGGT) the composition is skewed to gly residues. 12 residues coordinate Cu(2+): histidine 53, glycine 54, glycine 55, histidine 61, glycine 62, glycine 63, histidine 69, glycine 70, glycine 71, histidine 77, glycine 78, and glycine 79. Residues cysteine 171 and cysteine 206 are joined by a disulfide bond. Asparagine 173 and asparagine 189 each carry an N-linked (GlcNAc...) asparagine glycan. Residue serine 222 is the site of GPI-anchor amidated serine attachment. Positions 223-239 (SMVLFSSPPVILLISFL) are cleaved as a propeptide — removed in mature form.

It belongs to the prion family. Monomer and homodimer. Has a tendency to aggregate into amyloid fibrils containing a cross-beta spine, formed by a steric zipper of superposed beta-strands. Soluble oligomers may represent an intermediate stage on the path to fibril formation. Copper binding may promote oligomerization. Interacts with GRB2, APP, ERI3/PRNPIP and SYN1. Mislocalized cytosolically exposed PrP interacts with MGRN1; this interaction alters MGRN1 subcellular location and causes lysosomal enlargement. Interacts with APP. Interacts with KIAA1191. Interacts with ADGRG6.

Its subcellular location is the cell membrane. The protein resides in the golgi apparatus. Its primary physiological function is unclear. May play a role in neuronal development and synaptic plasticity. May be required for neuronal myelin sheath maintenance. May promote myelin homeostasis through acting as an agonist for ADGRG6 receptor. May play a role in iron uptake and iron homeostasis. Soluble oligomers are toxic to cultured neuroblastoma cells and induce apoptosis (in vitro). Association with GPC1 (via its heparan sulfate chains) targets PRNP to lipid rafts. Also provides Cu(2+) or Zn(2+) for the ascorbate-mediated GPC1 deaminase degradation of its heparan sulfate side chains. The chain is Major prion protein (PRNP) from Aotus trivirgatus (Three-striped night monkey).